The sequence spans 446 residues: Tubulin beta-2 chain (446 aa).

GTP contacts are provided by Q11, E69, S138, G142, T143, G144, N204, and N226. E69 contributes to the Mg(2+) binding site. A disordered region spans residues 426–446 (QEAGIDEEEEYEEEAPAEHEE). Acidic residues predominate over residues 429 to 440 (GIDEEEEYEEEA).

This sequence belongs to the tubulin family. As to quaternary structure, dimer of alpha and beta chains. A typical microtubule is a hollow water-filled tube with an outer diameter of 25 nm and an inner diameter of 15 nM. Alpha-beta heterodimers associate head-to-tail to form protofilaments running lengthwise along the microtubule wall with the beta-tubulin subunit facing the microtubule plus end conferring a structural polarity. Microtubules usually have 13 protofilaments but different protofilament numbers can be found in some organisms and specialized cells. Mg(2+) serves as cofactor.

Its subcellular location is the cytoplasm. The protein resides in the cytoskeleton. Its function is as follows. Tubulin is the major constituent of microtubules, a cylinder consisting of laterally associated linear protofilaments composed of alpha- and beta-tubulin heterodimers. Microtubules grow by the addition of GTP-tubulin dimers to the microtubule end, where a stabilizing cap forms. Below the cap, tubulin dimers are in GDP-bound state, owing to GTPase activity of alpha-tubulin. The chain is Tubulin beta-2 chain from Hypocrea virens (Gliocladium virens).